The following is a 441-amino-acid chain: Cysteine--tRNA ligase (441 aa).

C24 serves as a coordination point for Zn(2+). A 'HIGH' region motif is present at residues P26–N36. Zn(2+) is bound by residues C204, H230, and E234. Residues K262–S266 carry the 'KMSKS' region motif. K265 contacts ATP.

Belongs to the class-I aminoacyl-tRNA synthetase family. In terms of assembly, monomer. It depends on Zn(2+) as a cofactor.

It is found in the cytoplasm. It catalyses the reaction tRNA(Cys) + L-cysteine + ATP = L-cysteinyl-tRNA(Cys) + AMP + diphosphate. The sequence is that of Cysteine--tRNA ligase from Mesoplasma florum (strain ATCC 33453 / NBRC 100688 / NCTC 11704 / L1) (Acholeplasma florum).